A 957-amino-acid chain; its full sequence is MAAQKIRSANTNGLPRCKSEGALIDFSGVPDPSLSEVKVLSPSSLRIDNPASLENVKEVVAIKDYCPNNFTTLKFSKGEHLYVLDASGGDWWYAHNTTEMGYIPSSYVQPLNYRDSCLSDSGMIDGLLESVDEGVKELDLLGDWTNSSNQDSVKKCHNNPFLRPSVSNPFLNGPLVPQTHTADTENSVDLLLFDPLAPSHAIASETSTDVLLDLLPNTSQNEVTVPVKRDNPFFRSKRSYSLSELSVLQAKSESPTTGSFFAGLKSPAPEQFQSREDFRTAWLNHRKLARSCHDLDLLGQNPGWGQTQPVETSIVCRLDSSGGAVQLPDTSISILVPEKHVASGETQQISLKALLDPPLELNNDKCTTVSPVLEIKLSNMDVQSPLTLEVRISVALGGNASALNMVGIKCLRSDAKEGPYNSVTQIYMYGDTVQVKLDNLEPVMYVVMVAQGQGIVSPSSVWEYINKKVTVGLYGPKHIHPSFKAVIVIFGHDCAPKSLLVNEVGQQANKSAPVTLQLWGKQQFVLPKPQDLQLCLFSNMTNYRVDAGDQGKMVRGFQLKLGKVSRLIFPITCQDSAQLSDFTLRVQVRDEAGGVLSQYCVQTPQPPPKTGSKSTGPRRFLKKKEVGKIVLSPLALTYKYPTFQDRPVTSLKYGKLIKTVVRQSKNPYLLEYKKGDVIGLLSEEKIRLKGQLWNKEWYIGYYQGKLGLVHAKNVLVVGKVKPSFFSGPELTTGLLLEQILRPCKFLTYIYASVRTLLMENIGSWRCFADALGYGNLPLSYFCRVELESETERVASVLEKLKEECNSEGKEKKSFQKELIMALLKIDCQGLVVRLIQDFVLLTTAVEVASRWRELAEKLARVSKQQMEGYEAPHRDRNGMLDSEAMWKPAYDFLLTWSAQIGESYRDVIQELHTGLDKMRSPITKRWKHLTGTLIFVNSLDILRAAAFSTQEPEDCII.

In terms of domain architecture, SH3 1 spans 54–113; sequence ENVKEVVAIKDYCPNNFTTLKFSKGEHLYVLDASGGDWWYAHNTTEMGYIPSSYVQPLNY. Residues 312–449 enclose the ZU5 domain; sequence TSIVCRLDSS…LEPVMYVVMV (138 aa). The SH3 2 domain maps to 649-719; the sequence is TSLKYGKLIK…HAKNVLVVGK (71 aa).

As to quaternary structure, homodimer or homooligomer.

The protein resides in the membrane. It is found in the clathrin-coated pit. It localises to the cytoplasmic vesicle. The protein localises to the clathrin-coated vesicle. Its subcellular location is the nucleus. Its function is as follows. Possible role in regulating endocytosis of the transferrin receptor at the plasma membrane. Alternatively, may function as a negative regulator of the amino acid-induced TOR signaling by inhibiting the formation of active Rag GTPase complexes. Preferentially binds inactive Rag GTPase complexes and prevents their interaction with the mTORC1 complex inhibiting its relocalization to lysosomes and its activation. Thereby, may indirectly regulate cell growth, proliferation and autophagy. The sequence is that of SH3 domain-binding protein 4-B (sh3bp4-b) from Xenopus laevis (African clawed frog).